The chain runs to 353 residues: Guanine nucleotide-binding protein G(q) subunit alpha (353 aa).

2 S-palmitoyl cysteine lipidation sites follow: Cys3 and Cys4. One can recognise a G-alpha domain in the interval Arg32–Val353. Positions Lys35–Thr48 are G1 motif. GTP contacts are provided by residues Gly40–Ser47, Leu174–Thr180, Asp199–Gln203, Asn268–Asp271, and Ala325. Mg(2+) is bound by residues Ser47 and Thr180. The G2 motif stretch occupies residues Asp172–Thr180. Positions Phe195–Arg204 are G3 motif. A G4 motif region spans residues Ile264–Asp271. The G5 motif stretch occupies residues Thr323–Thr328.

This sequence belongs to the G-alpha family. G(q) subfamily. In terms of assembly, g proteins are composed of 3 units; alpha, beta and gamma. The alpha chain contains the guanine nucleotide binding site.

Guanine nucleotide-binding proteins (G proteins) are involved as modulators or transducers in various transmembrane signaling systems. The protein is Guanine nucleotide-binding protein G(q) subunit alpha (SCGQA) of Mizuhopecten yessoensis (Japanese scallop).